We begin with the raw amino-acid sequence, 437 residues long: MNYPYIPHTDEDVRAMLDFIGVSSIEELFSSIPVSARSSLNIPESRDEFSVFKQLKEISEMNNSLEDYAVFLGAGVYKRYVPTVVYDLAMKPDFLTAYTPYQAEVSQGTLQALFEYQTMVCELTGMEVANASMYDGATALAEAALMSFRLTGKEKVVVARSVHPEYRAVLRTYLEKRGFTVVEAGYDETGRVLLEEVDEETAAIAVQYPNFFGIIEDLDYVRSRSGNALLIVVVEPVSLALLEPPGSYGADIVVGEGQSLGLPMWFGGYSLGIFATREEYVRQMPGRLIGQTVDQAGNTAYTMILQTREQHIRRARATSNICSNHAHAALIAAVYMSVMGPDGLKEVARRSYNAAHYLQERLEEIGFKLCFSGEFFNEFVFNVPEDYPDRWRKMMEKKILGPLPLEEFYPELGDTALACATEVISKEDIEKLLEAMK.

The protein belongs to the GcvP family. N-terminal subunit subfamily. The glycine cleavage system is composed of four proteins: P, T, L and H. In this organism, the P 'protein' is a heterodimer of two subunits.

The catalysed reaction is N(6)-[(R)-lipoyl]-L-lysyl-[glycine-cleavage complex H protein] + glycine + H(+) = N(6)-[(R)-S(8)-aminomethyldihydrolipoyl]-L-lysyl-[glycine-cleavage complex H protein] + CO2. Functionally, the glycine cleavage system catalyzes the degradation of glycine. The P protein binds the alpha-amino group of glycine through its pyridoxal phosphate cofactor; CO(2) is released and the remaining methylamine moiety is then transferred to the lipoamide cofactor of the H protein. The chain is Probable glycine dehydrogenase (decarboxylating) subunit 1 from Thermotoga maritima (strain ATCC 43589 / DSM 3109 / JCM 10099 / NBRC 100826 / MSB8).